The sequence spans 672 residues: Amidase chyE (672 aa).

C2 acts as the Nucleophile in catalysis. The 218-residue stretch at 2 to 219 (CGISAFLCHP…PGHYLISRPN (218 aa)) folds into the Glutamine amidotransferase type-2 domain. The Asparagine synthetase domain occupies 250–639 (VRKRLLEAVK…TQEAVEKAFT (390 aa)).

This sequence belongs to the asparagine synthetase family.

It participates in pigment biosynthesis. In terms of biological role, amidase; part of the gene cluster that mediates the biosynthesis of the yellow pigment chrysogine. the NRPS chyA mediates the condensation of anthranilic acid and alanine into the intermediate 2-(2-aminopropanamido)benzoic acid. The remainder of the pathway is highly branched yielding at least 13 chrysogine-related compounds. The malonyl transferase chyE converts 2-(2-aminopropanamido)benzoic acid and 2-(2-aminopropanamido)benzamidine into 2-(2-(2-carboxyacetamido)propanamido)benzoic acid and 3-((1-((2-carbamoylphenyl)amino)-1-oxopropan-2-yl)amino)-3-oxopropanoic acid, respectively. ChyD is an amidase, being responsible for the amidation of the carboxylic acid moiety of 2-(2-aminopropanamido)benzoic acid, 2-(2-(2-carboxyacetamido)propanamido)benzoic acid and 2-(2-((4-amino-1-carboxy-4-oxobutyl)amino)propanamido)benzoic acid. ChyC is involved in the same reactions as ChyD, but plays a more minor role in the amidation reactions compared to chyD. The oxidoreductases chyH and chyM are involved in oxidation reactions that form N-pyruvoylanthranilamide from 2-(2-aminopropanamido)benzamidine and (1-((2-carbamoylphenyl)amino)-1-oxopropan-2-yl)glutamine, respectively. N-pyruvoylanthranilamide is further converted via two further branches in the pathway, yielding chrysogine and additional chrysogine-related coumpounds. Chrysogine is likely formed by a spontaneous ring closure from N-pyruvoylanthranilamide. This Penicillium rubens (strain ATCC 28089 / DSM 1075 / NRRL 1951 / Wisconsin 54-1255) (Penicillium chrysogenum) protein is Amidase chyE.